The primary structure comprises 127 residues: SH2 domain-containing protein 1A (127 aa).

The 97-residue stretch at 6–102 folds into the SH2 domain; it reads VYHGKISRET…GIVIPLQYPV (97 aa). Residues 67–92 are interaction with FYN SH3 domain; that stretch reads ETAPGVHKRYFRKIKNLISAFQKPDQ. The residue at position 89 (lysine 89) is an N6-acetyllysine. A disordered region spans residues 104 to 127; that stretch reads KSSPRSTQGTTGIREDPDVCLKAP. The segment covering 116–127 has biased composition (basic and acidic residues); that stretch reads IREDPDVCLKAP.

In terms of assembly, interacts with CD84, CD244, LY9, SLAMF1 and FYN. Interacts with NTRK1, NTRK2 and NTRK3.

The protein resides in the cytoplasm. In terms of biological role, cytoplasmic adapter regulating receptors of the signaling lymphocytic activation molecule (SLAM) family such as SLAMF1, CD244, LY9, CD84, SLAMF6 and SLAMF7. In SLAM signaling seems to cooperate with SH2D1B/EAT-2. Initially it has been proposed that association with SLAMF1 prevents SLAMF1 binding to inhibitory effectors including INPP5D/SHIP1 and PTPN11/SHP-2. However, by simultaneous interactions, recruits FYN which subsequently phosphorylates and activates SLAMF1. Positively regulates CD244/2B4- and CD84-mediated natural killer (NK) cell functions. Can also promote CD48-, SLAMF6 -, LY9-, and SLAMF7-mediated NK cell activation. In the context of NK cell-mediated cytotoxicity enhances conjugate formation with target cells. May also regulate the activity of the neurotrophin receptors NTRK1, NTRK2 and NTRK3. The sequence is that of SH2 domain-containing protein 1A (SH2D1A) from Saguinus oedipus (Cotton-top tamarin).